The sequence spans 345 residues: S-adenosylmethionine:tRNA ribosyltransferase-isomerase (345 aa).

This sequence belongs to the QueA family. Monomer.

The protein localises to the cytoplasm. It carries out the reaction 7-aminomethyl-7-carbaguanosine(34) in tRNA + S-adenosyl-L-methionine = epoxyqueuosine(34) in tRNA + adenine + L-methionine + 2 H(+). It participates in tRNA modification; tRNA-queuosine biosynthesis. Transfers and isomerizes the ribose moiety from AdoMet to the 7-aminomethyl group of 7-deazaguanine (preQ1-tRNA) to give epoxyqueuosine (oQ-tRNA). This chain is S-adenosylmethionine:tRNA ribosyltransferase-isomerase, found in Thermus thermophilus (strain ATCC BAA-163 / DSM 7039 / HB27).